The chain runs to 72 residues: uncharacterized protein (72 aa).

The helical transmembrane segment at 41 to 58 (FSFLVHIMCGLTLTSYVI) threads the bilayer.

The protein localises to the membrane. This is an uncharacterized protein from Dictyostelium discoideum (Social amoeba).